Here is a 327-residue protein sequence, read N- to C-terminus: GTPase Obg (327 aa).

An Obg domain is found at 2-160 (HILKDSLSIT…LNLRLELSLI (159 aa)). An OBG-type G domain is found at 161 to 326 (ADIGLVGFPN…LVSELFALSR (166 aa)). Residues 167-174 (GFPNAGKS), 192-196 (FTTRF), 213-216 (DVPG), 280-283 (NKLD), and 307-309 (SIY) contribute to the GTP site. Residues serine 174 and threonine 194 each coordinate Mg(2+).

It belongs to the TRAFAC class OBG-HflX-like GTPase superfamily. OBG GTPase family. As to quaternary structure, monomer. Requires Mg(2+) as cofactor.

The protein resides in the cytoplasm. Functionally, an essential GTPase which binds GTP, GDP and possibly (p)ppGpp with moderate affinity, with high nucleotide exchange rates and a fairly low GTP hydrolysis rate. Plays a role in control of the cell cycle, stress response, ribosome biogenesis and in those bacteria that undergo differentiation, in morphogenesis control. This Borrelia hermsii (strain HS1 / DAH) protein is GTPase Obg.